Consider the following 453-residue polypeptide: Glutamyl-tRNA(Gln) amidotransferase subunit A (453 aa).

Active-site charge relay system residues include lysine 53 and serine 128. Serine 152 acts as the Acyl-ester intermediate in catalysis.

Belongs to the amidase family. GatA subfamily. As to quaternary structure, heterotrimer of A, B and C subunits.

It carries out the reaction L-glutamyl-tRNA(Gln) + L-glutamine + ATP + H2O = L-glutaminyl-tRNA(Gln) + L-glutamate + ADP + phosphate + H(+). Its function is as follows. Allows the formation of correctly charged Gln-tRNA(Gln) through the transamidation of misacylated Glu-tRNA(Gln) in organisms which lack glutaminyl-tRNA synthetase. The reaction takes place in the presence of glutamine and ATP through an activated gamma-phospho-Glu-tRNA(Gln). In Helicobacter pylori (strain G27), this protein is Glutamyl-tRNA(Gln) amidotransferase subunit A.